Here is a 357-residue protein sequence, read N- to C-terminus: MTQPVQTIDVLLAEHADLERRLSDPDLHSNPDEARKAGRRFARLAPIVGTYRKLMAAREDLETARELAADDDSFTAEVADLESRVAQLDTQLTDMLAPRDPHDADDIVLEVKSGEGGEESALFAADLARMYIRYAERHGWTVTVLDEITSDLGGYKDATLSIRSKGDSADGVWSRMKFEGGVHRVQRVPVTESQGRVHTSAAGVLVYPEPEEVAEVQIDESDLRIDVFRSSGKGGQGVNTTDSAVRITHLPTGVVVTCQNERSQLQNKARALQVLAARLQAMAEEQASAEASADRASQIRTVDRSERIRTYNFPENRITDHRIGFKAHNLDQVLDGDLDALFDALAAADKQSRLQQA.

N5-methylglutamine is present on Gln236.

The protein belongs to the prokaryotic/mitochondrial release factor family. In terms of processing, methylated by PrmC. Methylation increases the termination efficiency of RF1.

The protein resides in the cytoplasm. Its function is as follows. Peptide chain release factor 1 directs the termination of translation in response to the peptide chain termination codons UAG and UAA. This is Peptide chain release factor 1 from Mycolicibacterium paratuberculosis (strain ATCC BAA-968 / K-10) (Mycobacterium paratuberculosis).